Reading from the N-terminus, the 131-residue chain is MSRNMEVNAGSSGEIPSPIRNRFQKSGSQAVYEVTETKKSCVTRVDMPGCPESDLTYWVDANNVHFFADEPAMPEYENAGRKYGGSMIFNPEAYDVKKTKVKLINGVLWITVPKIPGKNASINVKERILHY.

Positions 1–11 are enriched in polar residues; sequence MSRNMEVNAGS. The tract at residues 1 to 20 is disordered; the sequence is MSRNMEVNAGSSGEIPSPIR. The sHSP domain occupies 22 to 131; it reads RFQKSGSQAV…INVKERILHY (110 aa).

It belongs to the small heat shock protein (HSP20) family. As to quaternary structure, may form oligomeric structures.

The protein localises to the cytoplasm. The protein is 14.7 kDa heat shock protein (HSP14.7) of Arabidopsis thaliana (Mouse-ear cress).